Here is a 103-residue protein sequence, read N- to C-terminus: Co-chaperonin GroES (103 aa).

The protein belongs to the GroES chaperonin family. In terms of assembly, heptamer of 7 subunits arranged in a ring. Interacts with the chaperonin GroEL.

Its subcellular location is the cytoplasm. Together with the chaperonin GroEL, plays an essential role in assisting protein folding. The GroEL-GroES system forms a nano-cage that allows encapsulation of the non-native substrate proteins and provides a physical environment optimized to promote and accelerate protein folding. GroES binds to the apical surface of the GroEL ring, thereby capping the opening of the GroEL channel. This is Co-chaperonin GroES from Synechococcus sp. (strain JA-3-3Ab) (Cyanobacteria bacterium Yellowstone A-Prime).